A 122-amino-acid polypeptide reads, in one-letter code: MPTKPARDLQTFPNPKPDRPYEIAMECPEFTCVCPVTGQPDFATIRLRYVPAERCVELKSLKLYLWSFRDEGTFHEAVTNRICDDIVQAIAPRWIEVVGDFAVRGGIHTVVTARHGERPAGV.

Catalysis depends on Cys34, which acts as the Thioimide intermediate. Asp41 (proton donor) is an active-site residue. Substrate contacts are provided by residues 56 to 58 (VEL) and 75 to 76 (HE).

Belongs to the GTP cyclohydrolase I family. QueF type 1 subfamily.

It is found in the cytoplasm. The enzyme catalyses 7-aminomethyl-7-carbaguanine + 2 NADP(+) = 7-cyano-7-deazaguanine + 2 NADPH + 3 H(+). It functions in the pathway tRNA modification; tRNA-queuosine biosynthesis. Its function is as follows. Catalyzes the NADPH-dependent reduction of 7-cyano-7-deazaguanine (preQ0) to 7-aminomethyl-7-deazaguanine (preQ1). The protein is NADPH-dependent 7-cyano-7-deazaguanine reductase of Anaeromyxobacter sp. (strain Fw109-5).